The primary structure comprises 63 residues: Conotoxin Pn-B01411 (63 aa).

An N-terminal signal peptide occupies residues 1 to 22 (MRCFPVFIILLLLMASAPSFDA). A propeptide spanning residues 23-49 (RPKTEDDVPLSSFRDNLKRTLRTLLDP) is cleaved from the precursor. Ile-62 carries the isoleucine amide modification.

Belongs to the conotoxin T superfamily. In terms of processing, contains 2 disulfide bonds that can be either 'C1-C3, C2-C4' or 'C1-C4, C2-C3', since these disulfide connectivities have been observed for conotoxins with cysteine framework V (for examples, see AC P0DQQ7 and AC P81755). In terms of tissue distribution, expressed by the venom duct.

It localises to the secreted. This chain is Conotoxin Pn-B01411, found in Conus pennaceus (Feathered cone).